The chain runs to 199 residues: ATP-dependent Clp protease proteolytic subunit (199 aa).

The active-site Nucleophile is the S99. H124 is a catalytic residue.

The protein belongs to the peptidase S14 family. Fourteen ClpP subunits assemble into 2 heptameric rings which stack back to back to give a disk-like structure with a central cavity, resembling the structure of eukaryotic proteasomes.

The protein resides in the cytoplasm. The catalysed reaction is Hydrolysis of proteins to small peptides in the presence of ATP and magnesium. alpha-casein is the usual test substrate. In the absence of ATP, only oligopeptides shorter than five residues are hydrolyzed (such as succinyl-Leu-Tyr-|-NHMec, and Leu-Tyr-Leu-|-Tyr-Trp, in which cleavage of the -Tyr-|-Leu- and -Tyr-|-Trp bonds also occurs).. Cleaves peptides in various proteins in a process that requires ATP hydrolysis. Has a chymotrypsin-like activity. Plays a major role in the degradation of misfolded proteins. This is ATP-dependent Clp protease proteolytic subunit from Lactococcus lactis subsp. lactis (strain IL1403) (Streptococcus lactis).